We begin with the raw amino-acid sequence, 358 residues long: Methylthioribose-1-phosphate isomerase (358 aa).

M1 is subject to N-acetylmethionine. D248 serves as the catalytic Proton donor.

This sequence belongs to the eIF-2B alpha/beta/delta subunits family. MtnA subfamily.

It localises to the cytoplasm. It is found in the nucleus. The enzyme catalyses 5-(methylsulfanyl)-alpha-D-ribose 1-phosphate = 5-(methylsulfanyl)-D-ribulose 1-phosphate. The protein operates within amino-acid biosynthesis; L-methionine biosynthesis via salvage pathway; L-methionine from S-methyl-5-thio-alpha-D-ribose 1-phosphate: step 1/6. Its function is as follows. Catalyzes the interconversion of methylthioribose-1-phosphate (MTR-1-P) into methylthioribulose-1-phosphate (MTRu-1-P). In Bos taurus (Bovine), this protein is Methylthioribose-1-phosphate isomerase.